The sequence spans 148 residues: Ubiquitin conjugating enzyme E2 B (148 aa).

Positions 2 to 148 (AAHKRLQKEI…AKEWTKKYAK (147 aa)) constitute a UBC core domain. The active-site Glycyl thioester intermediate is C87.

This sequence belongs to the ubiquitin-conjugating enzyme family. As to quaternary structure, interacts with mkkA (via F-box/WD40 repeat domains).

It catalyses the reaction S-ubiquitinyl-[E1 ubiquitin-activating enzyme]-L-cysteine + [E2 ubiquitin-conjugating enzyme]-L-cysteine = [E1 ubiquitin-activating enzyme]-L-cysteine + S-ubiquitinyl-[E2 ubiquitin-conjugating enzyme]-L-cysteine.. It participates in protein modification; protein ubiquitination. Its function is as follows. Involved in protein ubiquitination and degradation during development. Mediates protein ubiquitination at the mound and finger stage required for subsequent development and may be an essential component of the developmental transition between the induction of postaggregative gene expression and subsequent cell-type differentiation and morphogenesis. ubcB and ubpB differentially control ubiquitination/deubiquitination and degradation of mkkA protein in a cell-type-specific and temporally regulated manner. The protein is Ubiquitin conjugating enzyme E2 B (ubcB) of Dictyostelium discoideum (Social amoeba).